The primary structure comprises 212 residues: Uridine kinase (212 aa).

ATP is bound at residue 13-20 (GASASGKS).

This sequence belongs to the uridine kinase family.

It localises to the cytoplasm. It carries out the reaction uridine + ATP = UMP + ADP + H(+). The catalysed reaction is cytidine + ATP = CMP + ADP + H(+). The protein operates within pyrimidine metabolism; CTP biosynthesis via salvage pathway; CTP from cytidine: step 1/3. It participates in pyrimidine metabolism; UMP biosynthesis via salvage pathway; UMP from uridine: step 1/1. The sequence is that of Uridine kinase from Shewanella frigidimarina (strain NCIMB 400).